The chain runs to 455 residues: Single-stranded DNA-binding protein homolog sam-10 (455 aa).

One can recognise a LisH domain in the interval 19 to 51; the sequence is ARDRLTSYIYEYLQQTGASKTAETFKEEVLSTN. Disordered regions lie at residues 217 to 249, 281 to 302, 314 to 343, and 357 to 442; these read PPPGGGAQPFPGASGSGGMMPNGAHPHMSLNSP, SDHQPMSAGPAAAAPGATTAGG, GPGSVPQVATTSVGSVGTPSSIGQQLHQPK, and EALT…NGEI. Composition is skewed to low complexity over residues 288-298 and 321-336; these read AGPAAAAPGAT and VATTSVGSVGTPSSIG. Residues 396-406 are compositionally biased toward polar residues; sequence HSVNNNVNPGT. Over residues 407-421 the composition is skewed to low complexity; it reads PGSNPLSNPMSNPPL.

In terms of tissue distribution, ubiquitously expressed with higher expression in the head and tail ganglia, the vulva and PLM neurons.

It is found in the cytoplasm. It localises to the nucleus. Its function is as follows. Involved cell autonomously in PLM neuron pre-synaptic differentiation by negatively regulating prk-2 expression and in neurite branch positioning. The sequence is that of Single-stranded DNA-binding protein homolog sam-10 from Caenorhabditis elegans.